The following is a 759-amino-acid chain: Short transient receptor potential channel 1 (759 aa).

Positions methionine 1 to glutamate 30 are disordered. At methionine 1–lysine 311 the chain is on the cytoplasmic side. The segment covering serine 15 to proline 28 has biased composition (low complexity). 3 ANK repeats span residues leucine 46–leucine 75, leucine 83–glutamine 109, and methionine 124–lysine 146. Zn(2+)-binding residues include histidine 155, cysteine 159, cysteine 161, and cysteine 164. The segment at residues proline 312–isoleucine 345 is an intramembrane region (discontinuously helical). The Cytoplasmic portion of the chain corresponds to isoleucine 346–lysine 352. Residues phenylalanine 353–tyrosine 370 traverse the membrane as a helical segment. Residues serine 371–arginine 388 lie on the Extracellular side of the membrane. The helical transmembrane segment at isoleucine 389–isoleucine 405 threads the bilayer. Residues lysine 406–arginine 421 are Cytoplasmic-facing. A helical membrane pass occupies residues asparagine 422–valine 441. The Extracellular portion of the chain corresponds to alanine 442–leucine 462. The helical transmembrane segment at valine 463 to tyrosine 483 threads the bilayer. Topologically, residues threonine 484–aspartate 502 are cytoplasmic. Residues phenylalanine 503–leucine 524 form a helical membrane-spanning segment. Residues tyrosine 525–alanine 589 are Extracellular-facing. Cysteine 537 and cysteine 542 are joined by a disulfide. A helical transmembrane segment spans residues valine 590–methionine 610. The Cytoplasmic segment spans residues leucine 611–asparagine 759.

Belongs to the transient receptor (TC 1.A.4) family. STrpC subfamily. TRPC1 sub-subfamily. As to quaternary structure, heterotetramer with TRPC4 and/or TRPC5. Forms a heteromeric ion channel with TRPC4, with a 1:3 TRPC1:TRPC4 stoichiometry. Unlike other TRP channel proteins, does not form a homomeric channel. Interacts with TRPC4AP. Interacts with ITPR3. Interacts with MX1 and RNF24. Interacts with FKBP4. Interacts with PLSCR1. Interacts with PKD2L2. Forms a heterotetramer with PKD2 with a 2:2 stoichiometry; has distinct channel properties separate from PKD2 or TRPC1 homomers alone. In terms of processing, activation of PRKCA induces phosphorylation of TRPC1 and subsequent Ca2+ entry into cells. In terms of tissue distribution, expressed in brain, hippocampus, amygdala, Purkinje cells and single neurons in the cortex and striatum.

The protein resides in the cell membrane. It carries out the reaction Ca(2+)(in) = Ca(2+)(out). The catalysed reaction is Na(+)(in) = Na(+)(out). The enzyme catalyses Li(+)(in) = Li(+)(out). It catalyses the reaction Cs(+)(in) = Cs(+)(out). Its activity is regulated as follows. May be operated by a phosphatidylinositol second messenger system activated by receptor tyrosine kinases or G-protein coupled receptors. Also activated by intracellular calcium store depletion. Forms a receptor-activated non-selective calcium permeant cation channel. Forms a heteromeric ion channel with TRPC4 or TRPC5 that has reduced calcium permeability compared to the homomeric TRPC4 or TRPC5 channel. Also permeable to monovalent ions including sodium, lithium and cesium ions. The polypeptide is Short transient receptor potential channel 1 (Trpc1) (Rattus norvegicus (Rat)).